The chain runs to 100 residues: MAKKGMVEREKKRQRLVAKYAHKRQALLEQISQASSQQERMDLHRQLQRLPRNSAPTRLRNRCWVTGRSRGYYRDFGLSRHVLREMAHEGLLPGVTKSSW.

This sequence belongs to the universal ribosomal protein uS14 family. As to quaternary structure, part of the 30S ribosomal subunit. Contacts proteins S3 and S10.

Binds 16S rRNA, required for the assembly of 30S particles and may also be responsible for determining the conformation of the 16S rRNA at the A site. The sequence is that of Small ribosomal subunit protein uS14 from Acaryochloris marina (strain MBIC 11017).